The primary structure comprises 1401 residues: DNA polymerase III PolC-type (1401 aa).

Residues 388 to 543 (FVVFDIETTG…EDAKATAEIF (156 aa)) form the Exonuclease domain.

This sequence belongs to the DNA polymerase type-C family. PolC subfamily.

The protein localises to the cytoplasm. It carries out the reaction DNA(n) + a 2'-deoxyribonucleoside 5'-triphosphate = DNA(n+1) + diphosphate. In terms of biological role, required for replicative DNA synthesis. This DNA polymerase also exhibits 3' to 5' exonuclease activity. This is DNA polymerase III PolC-type from Caldanaerobacter subterraneus subsp. tengcongensis (strain DSM 15242 / JCM 11007 / NBRC 100824 / MB4) (Thermoanaerobacter tengcongensis).